A 349-amino-acid chain; its full sequence is Divinyl chlorophyll a/b light-harvesting protein PcbB (349 aa).

6 helical membrane-spanning segments follow: residues 27 to 47 (FIAA…AATL), 57 to 77 (LPMG…GIGF), 91 to 113 (IAIL…SVYF), 201 to 221 (VMGG…FHIA), 241 to 261 (AILS…AFWA), and 306 to 326 (LVNV…WHAL).

The protein belongs to the PsbB/PsbC family. IsiA/Pcb subfamily. The antenna complex consists of divinyl chlorophylls (a and b) and divinyl chlorophyll a/b binding proteins and binds more divinyl chlorophyll b than does the antenna complex from high-light-adapted Prochlorococcus. Divinyl chlorophyll a serves as cofactor. It depends on divinyl chlorophyll b as a cofactor.

It is found in the cellular thylakoid membrane. In terms of biological role, the antenna complex functions as a light receptor, it captures and delivers excitation energy to photosystems II and I. The Prochlorales pcb genes are not related to higher plant LHCs. The sequence is that of Divinyl chlorophyll a/b light-harvesting protein PcbB (pcbB) from Prochlorococcus marinus (strain SARG / CCMP1375 / SS120).